The primary structure comprises 134 residues: NADH-quinone oxidoreductase subunit A (134 aa).

3 helical membrane passes run 14-34 (FFMFIFFSLGLCFFMLCLSWI), 66-86 (FYLIAMFFVVFDVEALYLYAW), and 96-116 (IGFSEALMFGISLLLGLFYLV).

The protein belongs to the complex I subunit 3 family. In terms of assembly, NDH-1 is composed of 13 different subunits. Subunits NuoA, H, J, K, L, M, N constitute the membrane sector of the complex.

It localises to the cell membrane. It catalyses the reaction a quinone + NADH + 5 H(+)(in) = a quinol + NAD(+) + 4 H(+)(out). Its function is as follows. NDH-1 shuttles electrons from NADH, via FMN and iron-sulfur (Fe-S) centers, to quinones in the respiratory chain. The immediate electron acceptor for the enzyme in this species is believed to be ubiquinone. Couples the redox reaction to proton translocation (for every two electrons transferred, four hydrogen ions are translocated across the cytoplasmic membrane), and thus conserves the redox energy in a proton gradient. The protein is NADH-quinone oxidoreductase subunit A of Buchnera aphidicola subsp. Acyrthosiphon pisum (strain APS) (Acyrthosiphon pisum symbiotic bacterium).